Consider the following 136-residue polypeptide: UPF0225 protein Mpe_A2093 (136 aa).

This sequence belongs to the UPF0225 family.

The chain is UPF0225 protein Mpe_A2093 from Methylibium petroleiphilum (strain ATCC BAA-1232 / LMG 22953 / PM1).